A 163-amino-acid polypeptide reads, in one-letter code: Protein-export protein SecB (163 aa).

This sequence belongs to the SecB family. Homotetramer, a dimer of dimers. One homotetramer interacts with 1 SecA dimer.

It is found in the cytoplasm. Its function is as follows. One of the proteins required for the normal export of preproteins out of the cell cytoplasm. It is a molecular chaperone that binds to a subset of precursor proteins, maintaining them in a translocation-competent state. It also specifically binds to its receptor SecA. This chain is Protein-export protein SecB, found in Burkholderia cenocepacia (strain ATCC BAA-245 / DSM 16553 / LMG 16656 / NCTC 13227 / J2315 / CF5610) (Burkholderia cepacia (strain J2315)).